We begin with the raw amino-acid sequence, 271 residues long: uncharacterized protein (271 aa).

The protein belongs to the metallo-dependent hydrolases superfamily. Peptidase M19 family.

This is an uncharacterized protein from Klebsiella pneumoniae.